A 663-amino-acid chain; its full sequence is MNFNSTNPYYFTHEKNLNNASKYSELPIAYQEIPLQSLPPYPKVASKLKGVVAGGKENNIASFQKPSSKATRPYIPSYTRLTYSVPPLPIPPPSEQSLDTIIYRNPSVSSSQSQEPEEFFLPLDDGKKPPYSYAMLIGMSIIRSPDRRLTLSAIYDWISNTFSFYNKSNNGWQNSIRHNLSLNKAFMKIERPRNLPGKGHFWSIRPGHEEQFLKLKLRKPGVNSRPAPPVQDVTSSTKYGSSTGSSGFNTFNTSPHIFNQRHQYLQNYYTASLTNIPTISNVNATNFHPLHSQQPYVDTPGIDAPSDLEAKFSDLGVSSVVSVTSPLQSCTNSPSPPLSSPASSASPSESLRNESLGIKSAKSLGLNKDDAPVEGPPVSHLEKDVETPSVHDSVLGFNDTVTNLGKKGLKDGTTNTLQIPAVRLPSLPSSPTIKNPSGLLLKRSNSIDFPTPPKALCPKLFCFRDDIVADDYTKFSLLSPIRSDMSGISASPNTNLKEHRTRILQMLATPDAKQLSSLTSSDAEFWSVTPLKSSILRNGDASKQVTLSESPKGDSLLDGGSLSYFTNNISSVAGLETPSKLPMSKSFDTFEDDFLDPMDMLSFENHFSDFNSNRKVSPVKREVRRKYISSATTIHSSAAQDDTYLPSPTKRKMPLLRQTSTLF.

The fork-head DNA-binding region spans 128–222 (KPPYSYAMLI…LKLKLRKPGV (95 aa)). Disordered regions lie at residues 220–241 (PGVNSRPAPPVQDVTSSTKYGS) and 325–387 (SPLQ…DVET). Residues 340-355 (SPASSASPSESLRNES) are compositionally biased toward low complexity. Serine 446 carries the phosphoserine modification.

It is found in the nucleus. Required for promoter sequence element PCB-driven, M-phase-specific transcription. Acts as a transcriptional activator with a role in the regulation of mitosis. Regulates septation and the periodic transcription of cdc15. This Schizosaccharomyces pombe (strain 972 / ATCC 24843) (Fission yeast) protein is Forkhead protein sep1 (sep1).